A 329-amino-acid chain; its full sequence is NAC domain-containing protein 79 (329 aa).

The 151-residue stretch at Leu17–Lys167 folds into the NAC domain. A DNA-binding region spans residues Val114 to Lys173.

As to expression, expressed at low levels in leaves.

The protein resides in the nucleus. The polypeptide is NAC domain-containing protein 79 (Arabidopsis thaliana (Mouse-ear cress)).